Here is a 371-residue protein sequence, read N- to C-terminus: MSRSFFATVLGLALAAMTVMAAPADAKSRIKDIVAFEGVRDNQLIGYGIVVGLNGSGDSLRNAPMTKQSLEAMLERQGVNVRDGNLNTKNTAAVMVTANLPPFSAAGARMDVTVSTLGDAKSLLGGTLLVTALQGADGQTYAVAQGSVQTGSVSAGGASGSSVTKGVPTAGRIAAGGIIEKETGFQMVSMDVLRMTLRNPDFTTSRRIADVINGRFPGCAQAQNPTIVAVRPPAGMDMISFVTAIENLEVEPDAPAKVIIDEVAGVIVMGDDVRISQVAIAQGNLTISVQENPAVSQPTPFSRGGQTVVVPQSAVSIEEEKGKKLLTLGGGASLKSLIGGLNALGVTPRDMISILQAIKASGALQAEIEVM.

The first 21 residues, methionine 1–alanine 21, serve as a signal peptide directing secretion.

It belongs to the FlgI family. In terms of assembly, the basal body constitutes a major portion of the flagellar organelle and consists of four rings (L,P,S, and M) mounted on a central rod.

It localises to the periplasm. The protein resides in the bacterial flagellum basal body. Assembles around the rod to form the L-ring and probably protects the motor/basal body from shearing forces during rotation. The polypeptide is Flagellar P-ring protein (Caulobacter sp. (strain K31)).